The primary structure comprises 575 residues: Bifunctional decalin synthase calF (575 aa).

The signal sequence occupies residues Met1–Gly18. 9 N-linked (GlcNAc...) asparagine glycosylation sites follow: Asn46, Asn103, Asn127, Asn175, Asn268, Asn308, Asn359, Asn425, and Asn485. The FAD-binding PCMH-type domain maps to Leu118 to Asp297.

It belongs to the oxygen-dependent FAD-linked oxidoreductase family.

The protein operates within secondary metabolite biosynthesis. In terms of biological role, bifunctional decaline synthase; part of the gene cluster that mediates the biosynthesis of calbistrin A and related compounds. Calbistrin A is a secondary metabolite with an interesting structure that was recently found to have bioactivity against leukemia cells. It consists of two polyketides linked by an ester bond: a bicyclic decalin containing polyketide and a linear 12 carbon dioic acid structure. The polyketide synthase calA is probably responsible for forming the decalin moiety. Because calA lacks a designated enoylreductase (ER) domain, the required activity is provided by the trans-enoyl reductase calK. Following release from the PKS, calF then probably catalyzes the oxidation and the subsequent Diels Alder cycloisomerization that lead to the formation of the decalin moiety. The decalin polyketide backbone includes two C-methyl groups, at C7 and C11 in backbone, of which the C7 position is probably methylated by the methyltransferase domain of calA. A candidate for adding the methyl group at C11, if not done by CalA, is the cluster methyltransferase calH. Several additional tailoring enzymes within the cluster could be involved in the modification of the decalin polyketide product. Those include the 3 cytochrome P450 monooxygenases CalE, CalG and CalL, of which one might be responsible for the introduction of the extra hydroxyl group attached to the backbone of the decalin moiety, at position C9 in the backbone, that allows for attachment of the linear moiety. One tailoring enzyme activity that is expected to be involved in biosynthesis of calbistrin is an acyltransferase for connecting the two polyketide synthase products, and which could be performed by the cluster acyltransferase calJ. The enzyme responsible for the biosynthesis of the linear moiety, probably a second PKS, has not been identified yet. The protein is Bifunctional decalin synthase calF of Penicillium decumbens.